The following is a 299-amino-acid chain: Undecaprenyl-diphosphatase (299 aa).

The next 8 membrane-spanning stretches (helical) occupy residues L10–V32, P63–F83, L112–W132, L143–F163, G178–S198, A213–L233, G243–I263, and W276–G296.

It belongs to the UppP family.

The protein localises to the cell inner membrane. The catalysed reaction is di-trans,octa-cis-undecaprenyl diphosphate + H2O = di-trans,octa-cis-undecaprenyl phosphate + phosphate + H(+). Functionally, catalyzes the dephosphorylation of undecaprenyl diphosphate (UPP). Confers resistance to bacitracin. The protein is Undecaprenyl-diphosphatase of Prochlorococcus marinus (strain MIT 9313).